Consider the following 529-residue polypeptide: Peptide chain release factor 3 (529 aa).

Positions 10 to 279 constitute a tr-type G domain; sequence EQRRCFGIIS…ALVEMAPAPG (270 aa). Residues 19–26, 87–91, and 141–144 each bind GTP; these read SHPDAGKT, DTPGH, and NKMD.

The protein belongs to the TRAFAC class translation factor GTPase superfamily. Classic translation factor GTPase family. PrfC subfamily.

It is found in the cytoplasm. Its function is as follows. Increases the formation of ribosomal termination complexes and stimulates activities of RF-1 and RF-2. It binds guanine nucleotides and has strong preference for UGA stop codons. It may interact directly with the ribosome. The stimulation of RF-1 and RF-2 is significantly reduced by GTP and GDP, but not by GMP. The chain is Peptide chain release factor 3 from Desulfatibacillum aliphaticivorans.